The following is a 356-amino-acid chain: 5-formaminoimidazole-4-carboxamide-1-(beta)-D-ribofuranosyl 5'-monophosphate synthetase 2 (356 aa).

His-27 and Ser-94 together coordinate 5-amino-1-(5-phospho-beta-D-ribosyl)imidazole-4-carboxamide. Residues 101 to 333 (RENFTGMAVP…YSDLMQKRLS (233 aa)) enclose the ATP-grasp domain. ATP-binding positions include 145 to 196 (PHDI…TRYD) and Glu-226. Asn-255 is a binding site for 5-amino-1-(5-phospho-beta-D-ribosyl)imidazole-4-carboxamide. Residues Glu-293 and Glu-306 each coordinate Mg(2+).

The protein belongs to the phosphohexose mutase family. Requires Mg(2+) as cofactor. The cofactor is Mn(2+).

It catalyses the reaction 5-amino-1-(5-phospho-beta-D-ribosyl)imidazole-4-carboxamide + formate + ATP = 5-formamido-1-(5-phospho-D-ribosyl)imidazole-4-carboxamide + ADP + phosphate. The protein operates within purine metabolism; IMP biosynthesis via de novo pathway; 5-formamido-1-(5-phospho-D-ribosyl)imidazole-4-carboxamide from 5-amino-1-(5-phospho-D-ribosyl)imidazole-4-carboxamide (formate route): step 1/1. In terms of biological role, catalyzes the ATP- and formate-dependent formylation of 5-aminoimidazole-4-carboxamide-1-beta-d-ribofuranosyl 5'-monophosphate (AICAR) to 5-formaminoimidazole-4-carboxamide-1-beta-d-ribofuranosyl 5'-monophosphate (FAICAR) in the absence of folates. The protein is 5-formaminoimidazole-4-carboxamide-1-(beta)-D-ribofuranosyl 5'-monophosphate synthetase 2 of Methanosarcina mazei (strain ATCC BAA-159 / DSM 3647 / Goe1 / Go1 / JCM 11833 / OCM 88) (Methanosarcina frisia).